We begin with the raw amino-acid sequence, 173 residues long: Chorion class B protein Ld32 (173 aa).

An N-terminal signal peptide occupies residues 1–7 (FVQSALS).

It belongs to the chorion protein family.

Functionally, this protein is one of many from the eggshell of the gypsy moth. In Lymantria dispar (Gypsy moth), this protein is Chorion class B protein Ld32.